The primary structure comprises 104 residues: MAGQQGIYCAPDNIVPNRDRVDVGCAPDGAMQLWVMEYEVTGIGKGCAMCKAINPQQAEMLLKSNGIYNGSSYLYKVTRIEQVIVPPCNGLMAEQVVTYKDVVS.

A disulfide bond links C25 and C88.

As to quaternary structure, homodimer; disulfide-linked. Interacts with the major capsid protein.

The protein resides in the virion. This chain is Portal vertex auxiliary protein, found in Bacteroides intestinalis (Bacteroides phage PhiCrAss001).